The primary structure comprises 441 residues: Serine--tRNA ligase (441 aa).

An L-serine-binding site is contributed by 250–252 (TSE). Residues 281 to 283 (RRE) and Val297 each bind ATP. Residue Glu304 coordinates L-serine. 368 to 371 (EIVS) is an ATP binding site. Thr402 contributes to the L-serine binding site.

Belongs to the class-II aminoacyl-tRNA synthetase family. Type-1 seryl-tRNA synthetase subfamily. Homodimer. The tRNA molecule binds across the dimer.

The protein resides in the cytoplasm. The enzyme catalyses tRNA(Ser) + L-serine + ATP = L-seryl-tRNA(Ser) + AMP + diphosphate + H(+). The catalysed reaction is tRNA(Sec) + L-serine + ATP = L-seryl-tRNA(Sec) + AMP + diphosphate + H(+). The protein operates within aminoacyl-tRNA biosynthesis; selenocysteinyl-tRNA(Sec) biosynthesis; L-seryl-tRNA(Sec) from L-serine and tRNA(Sec): step 1/1. In terms of biological role, catalyzes the attachment of serine to tRNA(Ser). Is also able to aminoacylate tRNA(Sec) with serine, to form the misacylated tRNA L-seryl-tRNA(Sec), which will be further converted into selenocysteinyl-tRNA(Sec). In Thermoplasma acidophilum (strain ATCC 25905 / DSM 1728 / JCM 9062 / NBRC 15155 / AMRC-C165), this protein is Serine--tRNA ligase.